The sequence spans 140 residues: ATP synthase epsilon chain (140 aa).

Belongs to the ATPase epsilon chain family. In terms of assembly, F-type ATPases have 2 components, CF(1) - the catalytic core - and CF(0) - the membrane proton channel. CF(1) has five subunits: alpha(3), beta(3), gamma(1), delta(1), epsilon(1). CF(0) has three main subunits: a, b and c.

It localises to the cell inner membrane. Functionally, produces ATP from ADP in the presence of a proton gradient across the membrane. The chain is ATP synthase epsilon chain from Vibrio parahaemolyticus serotype O3:K6 (strain RIMD 2210633).